A 142-amino-acid chain; its full sequence is Universal stress protein D (142 aa).

The protein belongs to the universal stress protein A family.

Its subcellular location is the cytoplasm. Functionally, required for resistance to DNA-damaging agents. This chain is Universal stress protein D (uspD), found in Escherichia coli O157:H7.